Consider the following 178-residue polypeptide: Hypoxanthine-guanine phosphoribosyltransferase (178 aa).

Diphosphate is bound by residues Lys-46 and Gly-47. Asp-103 is a binding site for Mg(2+). The active-site Proton acceptor is the Asp-106. Residues Lys-134, 155-156, and Asp-162 contribute to the GMP site; that span reads FL. Residue Arg-168 coordinates diphosphate.

The protein belongs to the purine/pyrimidine phosphoribosyltransferase family. Mg(2+) is required as a cofactor.

The protein localises to the cytoplasm. The enzyme catalyses IMP + diphosphate = hypoxanthine + 5-phospho-alpha-D-ribose 1-diphosphate. It carries out the reaction GMP + diphosphate = guanine + 5-phospho-alpha-D-ribose 1-diphosphate. It participates in purine metabolism; IMP biosynthesis via salvage pathway; IMP from hypoxanthine: step 1/1. Its pathway is purine metabolism; GMP biosynthesis via salvage pathway; GMP from guanine: step 1/1. In terms of biological role, purine salvage pathway enzyme that catalyzes the transfer of the ribosyl-5-phosphate group from 5-phospho-alpha-D-ribose 1-diphosphate (PRPP) to the N9 position of the 6-oxopurines hypoxanthine and guanine to form the corresponding ribonucleotides IMP (inosine 5'-monophosphate) and GMP (guanosine 5'-monophosphate), with the release of PPi. The protein is Hypoxanthine-guanine phosphoribosyltransferase (hpt) of Aquifex aeolicus (strain VF5).